A 464-amino-acid chain; its full sequence is Chromosomal replication initiator protein DnaA (464 aa).

The domain I, interacts with DnaA modulators stretch occupies residues 1–74 (MDAVGYEVFW…ERKFLELSGH (74 aa)). The segment at 74-117 (HPIKLLFAVKKGTPHGNTAPPKHVHTYLEKNSPAEVPSKKSFHP) is domain II. Residues 118–341 (DLNRDYTFEN…GALTKIIAFI (224 aa)) are domain III, AAA+ region. The ATP site is built by G162, G164, K165, and T166. Residues 342-464 (EVSGSITIDI…LKSKVQDSIR (123 aa)) form a domain IV, binds dsDNA region.

Belongs to the DnaA family. As to quaternary structure, oligomerizes as a right-handed, spiral filament on DNA at oriC.

The protein localises to the cytoplasm. In terms of biological role, plays an essential role in the initiation and regulation of chromosomal replication. ATP-DnaA binds to the origin of replication (oriC) to initiate formation of the DNA replication initiation complex once per cell cycle. Binds the DnaA box (a 9 base pair repeat at the origin) and separates the double-stranded (ds)DNA. Forms a right-handed helical filament on oriC DNA; dsDNA binds to the exterior of the filament while single-stranded (ss)DNA is stabiized in the filament's interior. The ATP-DnaA-oriC complex binds and stabilizes one strand of the AT-rich DNA unwinding element (DUE), permitting loading of DNA polymerase. After initiation quickly degrades to an ADP-DnaA complex that is not apt for DNA replication. Binds acidic phospholipids. This chain is Chromosomal replication initiator protein DnaA, found in Treponema pallidum (strain Nichols).